Here is a 91-residue protein sequence, read N- to C-terminus: Potassium channel toxin BuTXK-beta (91 aa).

Residues 1–20 (MQRNLVVLLLLGMVALSSCG) form the signal peptide. A propeptide spanning residues 21–27 (LREKHFQ) is cleaved from the precursor. Residues 54-91 (QFGCPAYQGYCDDHCQDIKKEEGFCHGMKCKCGIPMGF) enclose the BetaSPN-type CS-alpha/beta domain. 3 disulfides stabilise this stretch: Cys-57–Cys-78, Cys-64–Cys-83, and Cys-68–Cys-85.

Belongs to the long chain scorpion toxin family. Class 1 subfamily. Expressed by the venom gland.

Its subcellular location is the secreted. Its function is as follows. Inhibits voltage-gated potassium channel. The protein is Potassium channel toxin BuTXK-beta of Buthus israelis (Israeli scorpion).